The chain runs to 176 residues: Peptide deformylase (176 aa).

Positions 94 and 136 each coordinate Fe cation. The active site involves Glu-137. His-140 lines the Fe cation pocket.

Belongs to the polypeptide deformylase family. Requires Fe(2+) as cofactor.

The enzyme catalyses N-terminal N-formyl-L-methionyl-[peptide] + H2O = N-terminal L-methionyl-[peptide] + formate. In terms of biological role, removes the formyl group from the N-terminal Met of newly synthesized proteins. Requires at least a dipeptide for an efficient rate of reaction. N-terminal L-methionine is a prerequisite for activity but the enzyme has broad specificity at other positions. The chain is Peptide deformylase from Mesorhizobium japonicum (strain LMG 29417 / CECT 9101 / MAFF 303099) (Mesorhizobium loti (strain MAFF 303099)).